The chain runs to 475 residues: Methionine aminopeptidase 2-1 (475 aa).

A compositionally biased stretch (basic and acidic residues) spans Met-1–Thr-12. A disordered region spans residues Met-1–Leu-97. Over residues Asn-44 to Glu-57 the composition is skewed to acidic residues. Over residues Lys-70–Lys-83 the composition is skewed to basic residues. A substrate-binding site is contributed by His-211. Residues Asp-232, Asp-243, and His-312 each coordinate a divalent metal cation. A substrate-binding site is contributed by His-320. A divalent metal cation contacts are provided by Glu-345 and Glu-456.

It belongs to the peptidase M24A family. Methionine aminopeptidase eukaryotic type 2 subfamily. Co(2+) serves as cofactor. Requires Zn(2+) as cofactor. It depends on Mn(2+) as a cofactor. Fe(2+) is required as a cofactor.

The protein localises to the cytoplasm. It catalyses the reaction Release of N-terminal amino acids, preferentially methionine, from peptides and arylamides.. In terms of biological role, cotranslationally removes the N-terminal methionine from nascent proteins. The N-terminal methionine is often cleaved when the second residue in the primary sequence is small and uncharged (Met-Ala-, Cys, Gly, Pro, Ser, Thr, or Val). In Aspergillus niger (strain ATCC MYA-4892 / CBS 513.88 / FGSC A1513), this protein is Methionine aminopeptidase 2-1.